Consider the following 430-residue polypeptide: S-adenosylmethionine synthase (430 aa).

ATP is bound at residue H14. D16 lines the Mg(2+) pocket. E42 serves as a coordination point for K(+). Positions 55 and 98 each coordinate L-methionine. Positions 98 to 108 (QSADINRGVER) are flexible loop. ATP-binding positions include 164–166 (DAK), 254–255 (KF), D263, 269–270 (RK), A286, and K290. Residue D263 participates in L-methionine binding. An L-methionine-binding site is contributed by K294.

The protein belongs to the AdoMet synthase family. As to quaternary structure, homotetramer; dimer of dimers. The cofactor is Mg(2+). It depends on K(+) as a cofactor.

The protein localises to the cytoplasm. The catalysed reaction is L-methionine + ATP + H2O = S-adenosyl-L-methionine + phosphate + diphosphate. Its pathway is amino-acid biosynthesis; S-adenosyl-L-methionine biosynthesis; S-adenosyl-L-methionine from L-methionine: step 1/1. In terms of biological role, catalyzes the formation of S-adenosylmethionine (AdoMet) from methionine and ATP. The overall synthetic reaction is composed of two sequential steps, AdoMet formation and the subsequent tripolyphosphate hydrolysis which occurs prior to release of AdoMet from the enzyme. The polypeptide is S-adenosylmethionine synthase (Phocaeicola vulgatus (strain ATCC 8482 / DSM 1447 / JCM 5826 / CCUG 4940 / NBRC 14291 / NCTC 11154) (Bacteroides vulgatus)).